Here is a 503-residue protein sequence, read N- to C-terminus: Potassium voltage-gated channel subfamily V member 1 (503 aa).

2 disordered regions span residues 1-20 (MDLSPRNRPLLDSSSLDSGS) and 171-192 (KKDTDDQESQHESEQDFSKGPC). Residues 3 to 213 (LSPRNRPLLD…EKPGSSTAAR (211 aa)) lie on the Cytoplasmic side of the membrane. Positions 10-20 (LLDSSSLDSGS) are enriched in low complexity. Over residues 171–187 (KKDTDDQESQHESEQDF) the composition is skewed to basic and acidic residues. The chain crosses the membrane as a helical span at residues 214 to 234 (IFGVISIIFVAVSIVNMALMS). Over 235 to 241 (AELSWLN) the chain is Extracellular. Residues 242-262 (LQLLEILEYVCISWFTGEFVL) form a helical membrane-spanning segment. Residues 263-279 (RFLCVKDRCHFLRKVPN) are Cytoplasmic-facing. A helical membrane pass occupies residues 280–300 (IIDLLAILPFYITLLVESLSG). The Extracellular portion of the chain corresponds to 301 to 312 (SHTTQELENVGR). Residues 313-334 (LVQVLRLLRALRMLKLGRHSTG) form a helical; Voltage-sensor membrane-spanning segment. Over 335-348 (LRSLGMTITQCYEE) the chain is Cytoplasmic. The chain crosses the membrane as a helical span at residues 349–369 (VGLLLLFLSVGISIFSTIEYF). Residues 395-400 (TVGYGD) carry the Selectivity filter motif. The helical transmembrane segment at 410 to 430 (IVAFMCILSGILVLALPIAII) threads the bilayer. Residues 431 to 503 (NDRFSACYFT…RSSGGDDFWF (73 aa)) are Cytoplasmic-facing.

Belongs to the potassium channel family. V (TC 1.A.1.2) subfamily. Kv8.1/KCNV1 sub-subfamily. In terms of assembly, heteromultimer with KCNB1 and KCNB2. Interacts with KCNC4 and KCND1.

The protein resides in the cell membrane. Functionally, potassium channel subunit that does not form functional channels by itself. Modulates KCNB1 and KCNB2 channel activity by shifting the threshold for inactivation to more negative values and by slowing the rate of inactivation. Can down-regulate the channel activity of KCNB1, KCNB2, KCNC4 and KCND1, possibly by trapping them in intracellular membranes. The polypeptide is Potassium voltage-gated channel subfamily V member 1 (Kcnv1) (Mus musculus (Mouse)).